The following is a 187-amino-acid chain: Hypoxanthine/guanine phosphoribosyltransferase (187 aa).

This sequence belongs to the purine/pyrimidine phosphoribosyltransferase family. Archaeal HPRT subfamily. As to quaternary structure, homodimer.

It localises to the cytoplasm. It carries out the reaction IMP + diphosphate = hypoxanthine + 5-phospho-alpha-D-ribose 1-diphosphate. The catalysed reaction is GMP + diphosphate = guanine + 5-phospho-alpha-D-ribose 1-diphosphate. Its pathway is purine metabolism; IMP biosynthesis via salvage pathway; IMP from hypoxanthine: step 1/1. In terms of biological role, catalyzes a salvage reaction resulting in the formation of IMP that is energically less costly than de novo synthesis. In Methanococcus voltae (strain ATCC BAA-1334 / A3), this protein is Hypoxanthine/guanine phosphoribosyltransferase.